We begin with the raw amino-acid sequence, 98 residues long: Large ribosomal subunit protein uL23 (98 aa).

It belongs to the universal ribosomal protein uL23 family. In terms of assembly, part of the 50S ribosomal subunit. Contacts protein L29, and trigger factor when it is bound to the ribosome.

Functionally, one of the early assembly proteins it binds 23S rRNA. One of the proteins that surrounds the polypeptide exit tunnel on the outside of the ribosome. Forms the main docking site for trigger factor binding to the ribosome. The polypeptide is Large ribosomal subunit protein uL23 (Rickettsia prowazekii (strain Madrid E)).